Reading from the N-terminus, the 155-residue chain is Ribosomal RNA large subunit methyltransferase H (155 aa).

S-adenosyl-L-methionine-binding positions include leucine 72, glycine 104, and 123–128; that span reads LSRMTF.

This sequence belongs to the RNA methyltransferase RlmH family. Homodimer.

The protein resides in the cytoplasm. The enzyme catalyses pseudouridine(1915) in 23S rRNA + S-adenosyl-L-methionine = N(3)-methylpseudouridine(1915) in 23S rRNA + S-adenosyl-L-homocysteine + H(+). Specifically methylates the pseudouridine at position 1915 (m3Psi1915) in 23S rRNA. This Kosmotoga olearia (strain ATCC BAA-1733 / DSM 21960 / TBF 19.5.1) protein is Ribosomal RNA large subunit methyltransferase H.